A 269-amino-acid polypeptide reads, in one-letter code: Diaminopimelate epimerase (269 aa).

Positions 13, 47, and 65 each coordinate substrate. Catalysis depends on Cys74, which acts as the Proton donor. Substrate-binding positions include 75–76, Asn149, Asn182, and 200–201; these read GN and ER. Residue Cys209 is the Proton acceptor of the active site. Position 210–211 (210–211) interacts with substrate; the sequence is GT.

Belongs to the diaminopimelate epimerase family. In terms of assembly, homodimer.

The protein localises to the cytoplasm. It carries out the reaction (2S,6S)-2,6-diaminopimelate = meso-2,6-diaminopimelate. Its pathway is amino-acid biosynthesis; L-lysine biosynthesis via DAP pathway; DL-2,6-diaminopimelate from LL-2,6-diaminopimelate: step 1/1. Its function is as follows. Catalyzes the stereoinversion of LL-2,6-diaminopimelate (L,L-DAP) to meso-diaminopimelate (meso-DAP), a precursor of L-lysine and an essential component of the bacterial peptidoglycan. The chain is Diaminopimelate epimerase from Erythrobacter litoralis (strain HTCC2594).